The chain runs to 24 residues: Waglerin-4 (24 aa).

Cysteines 11 and 15 form a disulfide.

It belongs to the waglerin family. In terms of assembly, monomer. Expressed by the venom gland.

It localises to the secreted. Its function is as follows. Waglerin-2 selectively blocks the epsilon subunit of muscle nicotinic acetylcholine receptor (nAChR). Also has effects on rodent ionotropic GABA(A) receptors (GABR), since it potentiates I(GABA) in some neurons and depresses I(GABA) in others. In mice, it elicits tachypnea, ocular proptosis, rapid collapse and spasms, whereas no toxic effects on respiration and blood pressure are observed in rats. Functionally, waglerin-4 selectively blocks the epsilon subunit of muscle nicotinic acetylcholine receptor. It elicits tachypnea, ocular proptosis, rapid collapse and spasms in mice. It causes death by respiratory failure. This is Waglerin-4 from Tropidolaemus wagleri (Wagler's pit viper).